A 153-amino-acid chain; its full sequence is Ribosome maturation factor RimP (153 aa).

Belongs to the RimP family.

It localises to the cytoplasm. Required for maturation of 30S ribosomal subunits. This chain is Ribosome maturation factor RimP, found in Coxiella burnetii (strain CbuK_Q154) (Coxiella burnetii (strain Q154)).